Reading from the N-terminus, the 388-residue chain is Quinolone resistance protein NorA (388 aa).

The next 12 helical transmembrane spans lie at Ile-5 to Val-25, Leu-42 to Ala-62, Leu-69 to His-89, Val-99 to Ile-119, Phe-129 to Phe-149, Met-157 to Ile-177, Trp-201 to Phe-221, Asp-239 to Phe-259, Leu-269 to Ala-289, Trp-293 to Ile-313, Leu-331 to Phe-351, and Ile-355 to Ile-375.

The protein belongs to the major facilitator superfamily. TCR/Tet family.

Its subcellular location is the cell membrane. In terms of biological role, involved in quinolone resistance. May constitute a membrane-associated active efflux pump of hydrophilic quinolones. This is Quinolone resistance protein NorA (norA) from Staphylococcus aureus (strain Mu50 / ATCC 700699).